Consider the following 357-residue polypeptide: Probable cinnamyl alcohol dehydrogenase (357 aa).

Cys47 contributes to the Zn(2+) binding site. Position 49 (Ser49) interacts with NADP(+). 7 residues coordinate Zn(2+): His69, Glu70, Cys100, Cys103, Cys106, Cys114, and Cys163. NADP(+)-binding positions include Thr167, 188–193 (GLGGVG), 211–216 (SSSDKK), Thr251, Gly275, and 298–300 (SFI).

It belongs to the zinc-containing alcohol dehydrogenase family. As to quaternary structure, homodimer. Zn(2+) is required as a cofactor.

It carries out the reaction (E)-cinnamyl alcohol + NADP(+) = (E)-cinnamaldehyde + NADPH + H(+). It catalyses the reaction (E)-coniferol + NADP(+) = (E)-coniferaldehyde + NADPH + H(+). The catalysed reaction is (E)-sinapyl alcohol + NADP(+) = (E)-sinapaldehyde + NADPH + H(+). The enzyme catalyses (E)-4-coumaroyl alcohol + NADP(+) = (E)-4-coumaraldehyde + NADPH + H(+). It carries out the reaction (E)-caffeyl alcohol + NADP(+) = (E)-caffeyl aldehyde + NADPH + H(+). The protein operates within aromatic compound metabolism; phenylpropanoid biosynthesis. Its function is as follows. Involved in lignin biosynthesis. Catalyzes the final step specific for the production of lignin monomers. Catalyzes the NADPH-dependent reduction of coniferaldehyde, 5-hydroxyconiferaldehyde, sinapaldehyde, 4-coumaraldehyde and caffeyl aldehyde to their respective alcohols. This chain is Probable cinnamyl alcohol dehydrogenase, found in Pinus taeda (Loblolly pine).